The sequence spans 631 residues: MSATKLTRREQRAQAQHFIDTLEGTAFPNSKRIYITGSQPDIRIPMREIQLSPTLIGGGKDNPQYEENEAIPVYDTSGPYGDPDVAINVQQGLAKLRQPWIEARADSEELTDRSSAYTKERLADDGLDELRFTGLLTPKRAKAGKCVTQLHYARQGIVTPEMEFIAIRENMGRERIRGDVLRQQHPGVGFGARLPENITPEFVRDEVAAGRAIIPANINHPESEPMIIGRNFLVKVNANIGNSAVTSSIEEEVEKLVWSTRWGADTVMDLSTGRYIHETREWILRNSPVPIGTVPIYQALEKVNGIAEDLTWEAFRDTLLEQAEQGVDYFTIHAGVLLRYVPMTAKRLTGIVSRGGSIMAKWCLSHHQENFLYEHFREICEICAAYDVSLSLGDGLRPGSIQDANDEAQFAELHTLGELTKIAWEYDVQVMIEGPGHVPMQMIRRNMTEELEHCHEAPFYTLGPLTTDIAPGYDHFTSGIGAAMIGWFGCAMLCYVTPKEHLGLPNKEDVKQGLITYKIAAHAADLAKGHPGAQIRDNAMSKARFEFRWEDQFNLALDPFTARAYHDETLPQESGKVAHFCSMCGPKFCSMKISQEVRDYAAAQTIEVGMADMSENFRAKGGEIYLRKEEA.

Substrate contacts are provided by residues Asn-239, Met-268, Tyr-297, His-333, 353–355 (SRG), 394–397 (DGLR), and Glu-433. Residue His-437 participates in Zn(2+) binding. Substrate is bound at residue Tyr-460. Position 501 (His-501) interacts with Zn(2+). Residues Cys-581, Cys-584, and Cys-589 each contribute to the [4Fe-4S] cluster site.

Belongs to the ThiC family. Homodimer. Requires [4Fe-4S] cluster as cofactor.

It catalyses the reaction 5-amino-1-(5-phospho-beta-D-ribosyl)imidazole + S-adenosyl-L-methionine = 4-amino-2-methyl-5-(phosphooxymethyl)pyrimidine + CO + 5'-deoxyadenosine + formate + L-methionine + 3 H(+). Its pathway is cofactor biosynthesis; thiamine diphosphate biosynthesis. In terms of biological role, catalyzes the synthesis of the hydroxymethylpyrimidine phosphate (HMP-P) moiety of thiamine from aminoimidazole ribotide (AIR) in a radical S-adenosyl-L-methionine (SAM)-dependent reaction. The chain is Phosphomethylpyrimidine synthase from Citrobacter koseri (strain ATCC BAA-895 / CDC 4225-83 / SGSC4696).